We begin with the raw amino-acid sequence, 655 residues long: p-hydroxybenzoic acid efflux pump subunit AaeB (655 aa).

The next 11 membrane-spanning stretches (helical) occupy residues 13–33 (FAVKLASAIVLALFVGFHFQL), 38–58 (WAVLTAAIVAAGPAFAAGGEP), 69–89 (LRIIGTFIGCIAALTIIILMI), 93–113 (LLMVLVCCIWAGFCTWLSSLV), 121–141 (WGLAGYTALIIVITIQTEPLL), 152–172 (EIVIGIVCAIVADLLFSPRSI), 370–390 (LFWLWTGWTSGSGAMVMIAVV), 407–427 (FLYGTIAALPLGALYFLVILP), 431–451 (QSMLLLCISLAVMAFFIGIEV), 459–479 (LGALASTINILVLDNPMTFHF), and 482–502 (FLDSALGQLVGCFLAMMVILL).

The protein belongs to the aromatic acid exporter ArAE (TC 2.A.85) family.

It localises to the cell inner membrane. Its function is as follows. Forms an efflux pump with AaeA. Could function as a metabolic relief valve, allowing to eliminate certain compounds when they accumulate to high levels in the cell. This is p-hydroxybenzoic acid efflux pump subunit AaeB from Enterobacter cloacae subsp. cloacae (strain ATCC 13047 / DSM 30054 / NBRC 13535 / NCTC 10005 / WDCM 00083 / NCDC 279-56).